Here is a 366-residue protein sequence, read N- to C-terminus: tRNA(Met) cytidine acetate ligase (366 aa).

ATP-binding positions include 7–20, glycine 96, asparagine 152, and arginine 175; that span reads IAEF…HQYL.

Belongs to the TmcAL family.

The protein resides in the cytoplasm. The enzyme catalyses cytidine(34) in elongator tRNA(Met) + acetate + ATP = N(4)-acetylcytidine(34) in elongator tRNA(Met) + AMP + diphosphate. Its function is as follows. Catalyzes the formation of N(4)-acetylcytidine (ac(4)C) at the wobble position of elongator tRNA(Met), using acetate and ATP as substrates. First activates an acetate ion to form acetyladenylate (Ac-AMP) and then transfers the acetyl group to tRNA to form ac(4)C34. The sequence is that of tRNA(Met) cytidine acetate ligase from Streptococcus equi subsp. zooepidemicus (strain H70).